We begin with the raw amino-acid sequence, 849 residues long: Membrane protein-large ribosomal subunit bL9 fusion protein (849 aa).

Residues 1–680 (MFSKNKHNTK…TQLEGTNIKT (680 aa)) form a unknown region. 2 helical membrane passes run 11–31 (FIVI…LDFQ) and 64–84 (IIFF…VISF). Residues 214–342 (KTLALAMITF…GGDQVVVNIE (129 aa)) enclose the GGDEF domain. The large ribosomal subunit protein bL9 stretch occupies residues 681–849 (VTDTLKHFLK…FLNVTERKSK (169 aa)).

This sequence belongs to the bacterial ribosomal protein bL9 family.

Its subcellular location is the cell membrane. Binds to the 23S rRNA. This chain is Membrane protein-large ribosomal subunit bL9 fusion protein, found in Onion yellows phytoplasma (strain OY-M).